A 274-amino-acid polypeptide reads, in one-letter code: uncharacterized protein (274 aa).

This is an uncharacterized protein from Acidianus hospitalis (AFV-1).